A 304-amino-acid chain; its full sequence is Homoserine kinase (304 aa).

90-100 serves as a coordination point for ATP; that stretch reads PLARGLGSSAS.

This sequence belongs to the GHMP kinase family. Homoserine kinase subfamily.

The protein localises to the cytoplasm. The catalysed reaction is L-homoserine + ATP = O-phospho-L-homoserine + ADP + H(+). It participates in amino-acid biosynthesis; L-threonine biosynthesis; L-threonine from L-aspartate: step 4/5. In terms of biological role, catalyzes the ATP-dependent phosphorylation of L-homoserine to L-homoserine phosphate. This is Homoserine kinase from Staphylococcus aureus (strain MRSA252).